The following is a 382-amino-acid chain: Galactokinase (382 aa).

Residue Glu34 to Asp37 coordinates substrate. Gly124 to Ser130 is an ATP binding site. Mg(2+)-binding residues include Ser130 and Glu162. Asp174 (proton acceptor) is an active-site residue. Tyr223 lines the substrate pocket.

Belongs to the GHMP kinase family. GalK subfamily.

Its subcellular location is the cytoplasm. It carries out the reaction alpha-D-galactose + ATP = alpha-D-galactose 1-phosphate + ADP + H(+). The protein operates within carbohydrate metabolism; galactose metabolism. In terms of biological role, catalyzes the transfer of the gamma-phosphate of ATP to D-galactose to form alpha-D-galactose-1-phosphate (Gal-1-P). In Salmonella paratyphi C (strain RKS4594), this protein is Galactokinase.